Consider the following 268-residue polypeptide: 14-3-3-like protein GF14 upsilon (268 aa).

Phosphoserine is present on residues Ser-69 and Ser-192. At Thr-213 the chain carries Phosphothreonine. A disordered region spans residues 243-268 (EAGDDIKEAPKEVQKVDEQAQPPPSQ). A compositionally biased stretch (basic and acidic residues) spans 246-260 (DDIKEAPKEVQKVDE). Ser-267 is subject to Phosphoserine.

This sequence belongs to the 14-3-3 family. As to quaternary structure, interacts with EDE1. Interacts with DREB1A and DREB1B in the nucleus. Interacts with CINV1.

The protein localises to the cytoplasm. The protein resides in the nucleus. Its function is as follows. Is associated with a DNA binding complex that binds to the G box, a well-characterized cis-acting DNA regulatory element found in plant genes. May be involved in cell cycle regulation by binding to soluble EDE1 and sequestering it in an inactive form during the early stages of mitosis. In Arabidopsis thaliana (Mouse-ear cress), this protein is 14-3-3-like protein GF14 upsilon (GRF5).